The chain runs to 141 residues: MAMTVHCDIVSAEGEIFSGLVEMVIAHGNLGDLGIAPGHAPLITDLKPGPIRLIKQGGEAEVFYISGGFLEVQPNMVKVLADTVQRAADLDEASAQAAVLAAEKALNEKGADFDYGSATARLAEAAAQLRTVQQIRKKFGG.

This sequence belongs to the ATPase epsilon chain family. In terms of assembly, F-type ATPases have 2 components, CF(1) - the catalytic core - and CF(0) - the membrane proton channel. CF(1) has five subunits: alpha(3), beta(3), gamma(1), delta(1), epsilon(1). CF(0) has three main subunits: a, b and c.

It localises to the cell inner membrane. Functionally, produces ATP from ADP in the presence of a proton gradient across the membrane. The chain is ATP synthase epsilon chain from Pseudomonas savastanoi pv. phaseolicola (strain 1448A / Race 6) (Pseudomonas syringae pv. phaseolicola (strain 1448A / Race 6)).